The sequence spans 887 residues: Beta-galactosidase 9 (887 aa).

The first 30 residues, 1-30 (MAESIRTFSLQWRILSLIIALLVYFPILSG), serve as a signal peptide directing secretion. Asparagine 37 carries N-linked (GlcNAc...) asparagine glycosylation. The active-site Proton donor is glutamate 194. Glutamate 263 (nucleophile) is an active-site residue. 5 N-linked (GlcNAc...) asparagine glycosylation sites follow: asparagine 463, asparagine 485, asparagine 496, asparagine 527, and asparagine 785. In terms of domain architecture, SUEL-type lectin spans 791–877 (NSVAPEVHLH…KTLAVMSRCS (87 aa)). An N-linked (GlcNAc...) asparagine glycan is attached at asparagine 881.

Belongs to the glycosyl hydrolase 35 family. As to expression, ubiquitous, with higher expression levels in siliques.

Its subcellular location is the secreted. It localises to the extracellular space. The protein localises to the apoplast. The catalysed reaction is Hydrolysis of terminal non-reducing beta-D-galactose residues in beta-D-galactosides.. In Arabidopsis thaliana (Mouse-ear cress), this protein is Beta-galactosidase 9 (BGAL9).